Reading from the N-terminus, the 553-residue chain is Glycine betaine/proline/choline transporter VP1723 (553 aa).

Helical transmembrane passes span 43–63, 85–105, 122–142, 191–211, 231–251, 278–298, 310–330, 362–382, 393–413, 443–463, 490–510, and 515–535; these read NRVF…TLTF, FFLA…VTPL, AGWL…FFGV, WALH…IFSF, VWGW…VFGL, TQVV…VAGL, MILA…MAIL, WTAF…MFIA, FIIC…TAFG, VMPF…VFFI, VFWC…GGLA, and MAVT…VSLI.

This sequence belongs to the BCCT transporter (TC 2.A.15) family.

The protein resides in the cell inner membrane. In terms of biological role, involved in the uptake of osmoprotectants. Can transport glycine betaine, proline and choline. The polypeptide is Glycine betaine/proline/choline transporter VP1723 (Vibrio parahaemolyticus serotype O3:K6 (strain RIMD 2210633)).